An 87-amino-acid chain; its full sequence is HssA/B-like protein 58 (87 aa).

Residues 1–13 (MTILSAITSISRP) show a composition bias toward polar residues. The segment at 1–31 (MTILSAITSISRPNKSSKSVISSNGGSSLSM) is disordered. Over residues 14 to 31 (NKSSKSVISSNGGSSLSM) the composition is skewed to low complexity.

This sequence belongs to the hssA/B family.

This chain is HssA/B-like protein 58 (hssl58), found in Dictyostelium discoideum (Social amoeba).